The chain runs to 406 residues: Tyrosine-specific transport system 2 (406 aa).

A run of 11 helical transmembrane segments spans residues 7 to 27 (FGSA…AMPL), 38 to 58 (LLLL…FVEV), 83 to 103 (IFAT…YITG), 119 to 139 (AMSL…FVVV), 150 to 170 (VLFI…LPKV), 183 to 203 (AFVV…VIMA), 219 to 239 (AILI…LATH), 279 to 299 (VFSS…VFEG), 314 to 334 (FVLT…YPEG), 335 to 355 (FITA…ILPI), and 376 to 396 (NFAL…PFLI).

It belongs to the amino acid/polyamine transporter 2 family. Mtr/TnaB/TyrP permease subfamily.

The protein resides in the cell inner membrane. The catalysed reaction is L-tyrosine(in) + H(+)(in) = L-tyrosine(out) + H(+)(out). Its function is as follows. Transports tyrosine across the cytoplasmic membrane. The transport system is energized by the proton motive force. This Haemophilus influenzae (strain ATCC 51907 / DSM 11121 / KW20 / Rd) protein is Tyrosine-specific transport system 2 (tyrP-B).